We begin with the raw amino-acid sequence, 154 residues long: Proline dehydrogenase transcriptional activator (154 aa).

Residues 5-66 (IDATDRRILH…MLSPIRLGLI (62 aa)) form the HTH asnC-type domain. The H-T-H motif DNA-binding region spans 24-43 (VTELARKVGLSKTPVAARIR).

Functionally, transcriptional activator of the putA gene in response to proline. In Rhodobacter capsulatus (Rhodopseudomonas capsulata), this protein is Proline dehydrogenase transcriptional activator (putR).